The sequence spans 699 residues: Autophagy-related protein 9 (699 aa).

Over 1-98 the chain is Cytoplasmic; the sequence is MSHEDRGGDY…KGFMCIFFND (98 aa). A helical transmembrane segment spans residues 99-119; it reads LFELVSSLFVVLFFTFLVCFV. Residues 120-139 lie on the Lumenal side of the membrane; it reads DYSKLFSEQMPPPALRESVN. N139 carries N-linked (GlcNAc...) asparagine glycosylation. The helical transmembrane segment at 140 to 160 threads the bilayer; it reads FSAPIPIWLMVFLVIFSLYWL. Over 161–299 the chain is Cytoplasmic; the sequence is SKLFSFFSSI…KRLSRGLSRR (139 aa). Residues 300 to 320 lie within the membrane without spanning it; the sequence is FMTIGILGLFTTPFIFFFLLI. The Cytoplasmic segment spans residues 321–385; it reads NFFFEYAEEL…ESFPSQMLST (65 aa). Residues 386–406 traverse the membrane as a helical segment; sequence IAKFISFLFGSVLAVFIVLGI. Topologically, residues 407–420 are lumenal; that stretch reads VSDHFIMNYQIFDR. A helical membrane pass occupies residues 421-441; that stretch reads TPIWYIGILGTIVAITRSLIV. At 442-487 the chain is on the cytoplasmic side; sequence DENQVFQPAKHMARTVQNTHYLPMSWVGKTHTHKVRDEFLVLFEYR. The stretch at 488 to 508 is an intramembrane region; the sequence is IVDFVRDIFSVLFTPFILIFS. Over 509-699 the chain is Cytoplasmic; that stretch reads LPKSSQAIID…HKNDNFVNSI (191 aa). Low complexity predominate over residues 599–618; it reads IKNNNNNNNNNGSNNHIGNH. Positions 599–620 are disordered; sequence IKNNNNNNNNNGSNNHIGNHSQ.

The protein belongs to the ATG9 family. Homotrimer; forms a homotrimer with a central pore that forms a path between the two membrane leaflets.

It is found in the preautophagosomal structure membrane. The protein localises to the cytoplasmic vesicle membrane. It carries out the reaction a 1,2-diacyl-sn-glycero-3-phosphocholine(in) = a 1,2-diacyl-sn-glycero-3-phosphocholine(out). The catalysed reaction is a 1,2-diacyl-sn-glycero-3-phospho-L-serine(in) = a 1,2-diacyl-sn-glycero-3-phospho-L-serine(out). It catalyses the reaction a 1,2-diacyl-sn-glycero-3-phosphoethanolamine(in) = a 1,2-diacyl-sn-glycero-3-phosphoethanolamine(out). Phospholipid scramblase involved in autophagy by mediating autophagosomal membrane expansion. Cycles between the preautophagosomal structure/phagophore assembly site (PAS) and the cytoplasmic vesicle pool and supplies membrane for the growing autophagosome. Lipid scramblase activity plays a key role in preautophagosomal structure/phagophore assembly by distributing the phospholipids that arrive through ATG2 from the cytoplasmic to the luminal leaflet of the bilayer, thereby driving autophagosomal membrane expansion. Required for lipopolysaccharide (LPS)-enhanced bacterial clearance through the autophagic pathway. This is Autophagy-related protein 9 (atg9) from Dictyostelium discoideum (Social amoeba).